The following is a 242-amino-acid chain: 1-(5-phosphoribosyl)-5-[(5-phosphoribosylamino)methylideneamino] imidazole-4-carboxamide isomerase (242 aa).

Asp8 functions as the Proton acceptor in the catalytic mechanism. The Proton donor role is filled by Asp130.

The protein belongs to the HisA/HisF family.

The protein localises to the cytoplasm. The enzyme catalyses 1-(5-phospho-beta-D-ribosyl)-5-[(5-phospho-beta-D-ribosylamino)methylideneamino]imidazole-4-carboxamide = 5-[(5-phospho-1-deoxy-D-ribulos-1-ylimino)methylamino]-1-(5-phospho-beta-D-ribosyl)imidazole-4-carboxamide. The protein operates within amino-acid biosynthesis; L-histidine biosynthesis; L-histidine from 5-phospho-alpha-D-ribose 1-diphosphate: step 4/9. In Acidithiobacillus ferrooxidans (strain ATCC 53993 / BNL-5-31) (Leptospirillum ferrooxidans (ATCC 53993)), this protein is 1-(5-phosphoribosyl)-5-[(5-phosphoribosylamino)methylideneamino] imidazole-4-carboxamide isomerase.